Reading from the N-terminus, the 330-residue chain is Membrane progestin receptor gamma (330 aa).

The Cytoplasmic segment spans residues 1-51; it reads MLSLKLPRLFSIDQIPQVFHEQGILFGYRHPQSSATACILSLFQMTNETLN. The chain crosses the membrane as a helical span at residues 52-72; the sequence is IWTHLLPFWFFAWRFVTALYM. The Extracellular portion of the chain corresponds to 73 to 80; that stretch reads TDIKNDSY. A helical membrane pass occupies residues 81 to 101; it reads SWPMLVYMCTSCVYPLVSSCA. At 102 to 113 the chain is on the cytoplasmic side; sequence HTFSSMSKNARH. A helical transmembrane segment spans residues 114 to 134; that stretch reads ICYFLDYGAVNLFSLGSAIAY. Residues 135 to 141 are Extracellular-facing; sequence SAYTFPD. Residues 142–162 traverse the membrane as a helical segment; that stretch reads ALMCTTFHDYYVALAVLNTIL. At 163 to 186 the chain is on the cytoplasmic side; that stretch reads STGLSCYSRFLEIQKPRLCKVIRV. Residues 187-207 traverse the membrane as a helical segment; that stretch reads LAFAYPYTWDSLPIFYRLFLF. The Extracellular segment spans residues 208 to 253; sequence PGESAQNEATSYHQKHMIMTLLASFLYSAHLPERLAPGRFDYIGHS. Residues 254–274 traverse the membrane as a helical segment; that stretch reads HQLFHVCVILATHMQMEAILL. The Cytoplasmic portion of the chain corresponds to 275–294; sequence DKTLRKEWLLATSKPFSFSQ. The helical transmembrane segment at 295–315 threads the bilayer; the sequence is IAGAILLCIIFSLSNIIYFSA. At 316–330 the chain is on the extracellular side; it reads ALYRIPKPELHKKET.

It belongs to the ADIPOR family. Expressed in the brain, lung, kidney, colon, adrenal and lung.

The protein resides in the cell membrane. Plasma membrane progesterone (P4) receptor coupled to G proteins. Seems to act through a G(i) mediated pathway. May be involved in oocyte maturation. The chain is Membrane progestin receptor gamma from Homo sapiens (Human).